A 697-amino-acid polypeptide reads, in one-letter code: Zinc finger and BTB domain-containing protein 24 (697 aa).

Positions 10 to 133 constitute a BTB domain; that stretch reads GQLVVHSDAH…AYTDFQNNHS (124 aa). Polar residues predominate over residues 131 to 142; it reads NHSSPKPTTLNT. Disordered regions lie at residues 131–176 and 209–254; these read NHSS…EEKS and EQIA…SRYS. The a.T hook DNA-binding region spans 159 to 171; that stretch reads KRKRGRPKKVNTL. A compositionally biased stretch (basic and acidic residues) spans 212–245; that stretch reads AAKEKEESEPTCEPSREEEMPVEKDENYDPKTED. C2H2-type zinc fingers lie at residues 294-316, 322-344, 350-372, 378-400, 406-428, 434-456, 462-484, and 490-512; these read ARCK…QRSH, FKCN…TRMH, YTCT…MSLH, FTCD…YRVH, PECK…LRTH, FTCE…IRIH, YSCG…CILH, and FSCP…LKIH. The segment at 652-697 is disordered; that stretch reads QEQTEELHLATSTSDPAQHLQLTQEPGPPPPTHHVPQPTPLGQEQS. Positions 677 to 690 are enriched in pro residues; it reads PGPPPPTHHVPQPT.

The protein belongs to the krueppel C2H2-type zinc-finger protein family. Interacts with MN1. In terms of tissue distribution, widely expressed, with highest levels in naive B-cells.

Its subcellular location is the nucleus. May be involved in BMP2-induced transcription. The polypeptide is Zinc finger and BTB domain-containing protein 24 (ZBTB24) (Homo sapiens (Human)).